The chain runs to 467 residues: UDP-N-acetylmuramate--L-alanine ligase (467 aa).

Gly114–Thr120 is an ATP binding site.

It belongs to the MurCDEF family.

The protein localises to the cytoplasm. It catalyses the reaction UDP-N-acetyl-alpha-D-muramate + L-alanine + ATP = UDP-N-acetyl-alpha-D-muramoyl-L-alanine + ADP + phosphate + H(+). The protein operates within cell wall biogenesis; peptidoglycan biosynthesis. Functionally, cell wall formation. In Rhodopseudomonas palustris (strain BisB18), this protein is UDP-N-acetylmuramate--L-alanine ligase.